The following is a 266-amino-acid chain: Type III pantothenate kinase (266 aa).

Asp-6–Val-13 is an ATP binding site. Gly-107 to Arg-110 is a substrate binding site. Asp-109 serves as the catalytic Proton acceptor. Residue Asp-129 coordinates K(+). Thr-132 contributes to the ATP binding site. Residue Thr-184 coordinates substrate.

The protein belongs to the type III pantothenate kinase family. In terms of assembly, homodimer. The cofactor is NH4(+). Requires K(+) as cofactor.

It localises to the cytoplasm. It catalyses the reaction (R)-pantothenate + ATP = (R)-4'-phosphopantothenate + ADP + H(+). Its pathway is cofactor biosynthesis; coenzyme A biosynthesis; CoA from (R)-pantothenate: step 1/5. In terms of biological role, catalyzes the phosphorylation of pantothenate (Pan), the first step in CoA biosynthesis. The chain is Type III pantothenate kinase from Acidiphilium cryptum (strain JF-5).